A 156-amino-acid chain; its full sequence is Cellulose synthase operon protein D (156 aa).

It functions in the pathway glycan metabolism; bacterial cellulose biosynthesis. Its function is as follows. May have a major role in the perfection of crystallization, involved either in the pore structure itself or in the organization of the pores within the linear array of terminal synthesizing complexes (TCs). This chain is Cellulose synthase operon protein D (acsD), found in Komagataeibacter xylinus (Gluconacetobacter xylinus).